A 188-amino-acid chain; its full sequence is Protein GrpE (188 aa).

Over residues 1-16 (MEERNEQVVEEVKEAQ) the composition is skewed to basic and acidic residues. Residues 1–31 (MEERNEQVVEEVKEAQVEEAVTPENSEETVE) form a disordered region.

This sequence belongs to the GrpE family. As to quaternary structure, homodimer.

Its subcellular location is the cytoplasm. In terms of biological role, participates actively in the response to hyperosmotic and heat shock by preventing the aggregation of stress-denatured proteins, in association with DnaK and GrpE. It is the nucleotide exchange factor for DnaK and may function as a thermosensor. Unfolded proteins bind initially to DnaJ; upon interaction with the DnaJ-bound protein, DnaK hydrolyzes its bound ATP, resulting in the formation of a stable complex. GrpE releases ADP from DnaK; ATP binding to DnaK triggers the release of the substrate protein, thus completing the reaction cycle. Several rounds of ATP-dependent interactions between DnaJ, DnaK and GrpE are required for fully efficient folding. The sequence is that of Protein GrpE from Bacillus anthracis.